The primary structure comprises 136 residues: Protein NrdI (136 aa).

It belongs to the NrdI family.

In terms of biological role, probably involved in ribonucleotide reductase function. The sequence is that of Protein NrdI from Escherichia coli O7:K1 (strain IAI39 / ExPEC).